A 650-amino-acid chain; its full sequence is DNA gyrase subunit B (650 aa).

Over residues arginine 400–proline 414 the composition is skewed to basic and acidic residues. The disordered stretch occupies residues arginine 400–glycine 422. One can recognise a Toprim domain in the interval serine 435–proline 549. Mg(2+)-binding residues include glutamate 441, aspartate 514, and aspartate 516.

It belongs to the type II topoisomerase GyrB family. In terms of assembly, heterotetramer, composed of two GyrA and two GyrB chains. In the heterotetramer, GyrA contains the active site tyrosine that forms a transient covalent intermediate with DNA, while GyrB binds cofactors and catalyzes ATP hydrolysis. Mg(2+) is required as a cofactor. Mn(2+) serves as cofactor. The cofactor is Ca(2+).

The protein localises to the cytoplasm. It carries out the reaction ATP-dependent breakage, passage and rejoining of double-stranded DNA.. A type II topoisomerase that negatively supercoils closed circular double-stranded (ds) DNA in an ATP-dependent manner to modulate DNA topology and maintain chromosomes in an underwound state. Negative supercoiling favors strand separation, and DNA replication, transcription, recombination and repair, all of which involve strand separation. Also able to catalyze the interconversion of other topological isomers of dsDNA rings, including catenanes and knotted rings. Type II topoisomerases break and join 2 DNA strands simultaneously in an ATP-dependent manner. This Mycoplasma pneumoniae (strain ATCC 29342 / M129 / Subtype 1) (Mycoplasmoides pneumoniae) protein is DNA gyrase subunit B.